A 464-amino-acid chain; its full sequence is Synaptosomal-associated protein 47 (464 aa).

The tract at residues 20 to 42 is disordered; the sequence is GRLWDSSGVPQRQKRPGPWRTQT. 2 consecutive t-SNARE coiled-coil homology domains span residues 154–216 and 401–463; these read VADA…LTEL and TSLP…MKRL.

The protein belongs to the SVAP1 family. Forms a complex containing SNAP47, VAMP2 and STX1A. Associates with the BLOC-1 complex. Interacts with BLOC1S6.

Its subcellular location is the endomembrane system. The protein resides in the cytoplasm. It is found in the perinuclear region. Plays a role in intracellular membrane fusion. The sequence is that of Synaptosomal-associated protein 47 (SNAP47) from Homo sapiens (Human).